The sequence spans 211 residues: Bcl-2 homologous antagonist/killer (211 aa).

A disordered region spans residues 1–28; that stretch reads MASGQGPGPPRQECGEPALPSASEEQVA. Residue Ala-2 is modified to N-acetylalanine. Positions 74–88 match the BH3 motif; it reads VGRQLAIIGDDINRR. The BH1 motif lies at 117–136; the sequence is SLFESGINWGRVVALLGFGY. The Zn(2+) site is built by Asp-160 and His-164. The short motif at 169-184 is the BH2 element; it reads RWIAQRGGWVAALNLG. Residues 188-205 form a helical membrane-spanning segment; that stretch reads ILNVLVVLGVVLLGQFVV.

Belongs to the Bcl-2 family. Homodimer. Formation of the homodimer is zinc-dependent. Forms heterodimers with BCL2 and BCL2L1 isoform Bcl-X(L). Forms heterooligomers with BAX. Interacts with BCL2A1. Interacts with RTL10/BOP. Interacts with VDAC1. Interacts with GIMAP3/IAN4 and GIMAP5/IAN5. In terms of assembly, (Microbial infection) Interacts with vaccinia virus protein F1. As to quaternary structure, (Microbial infection) Interacts with myxoma virus protein M11L. (Microbial infection) Interacts with Epstein-Barr virus protein BALF1. In terms of assembly, (Microbial infection) Interacts with adenovirus protein E1B 19K. As to expression, expressed in a wide variety of tissues, with highest levels in the heart and skeletal muscle.

The protein localises to the mitochondrion outer membrane. In terms of biological role, plays a role in the mitochondrial apoptotic process. Upon arrival of cell death signals, promotes mitochondrial outer membrane (MOM) permeabilization by oligomerizing to form pores within the MOM. This releases apoptogenic factors into the cytosol, including cytochrome c, promoting the activation of caspase 9 which in turn processes and activates the effector caspases. The sequence is that of Bcl-2 homologous antagonist/killer (BAK1) from Homo sapiens (Human).